We begin with the raw amino-acid sequence, 198 residues long: Nucleoid occlusion factor SlmA (198 aa).

The HTH tetR-type domain maps to 9-70 (RNRREEILQA…SLIEFIEDSL (62 aa)). The H-T-H motif DNA-binding region spans 33-52 (TTAKLAANVGVSEAALYRHF). Positions 119–144 (DRLQGRINQLFERIEMQLRQVLREKK) form a coiled coil.

This sequence belongs to the nucleoid occlusion factor SlmA family. As to quaternary structure, homodimer. Interacts with FtsZ.

It localises to the cytoplasm. Its subcellular location is the nucleoid. Functionally, required for nucleoid occlusion (NO) phenomenon, which prevents Z-ring formation and cell division over the nucleoid. Acts as a DNA-associated cell division inhibitor that binds simultaneously chromosomal DNA and FtsZ, and disrupts the assembly of FtsZ polymers. SlmA-DNA-binding sequences (SBS) are dispersed on non-Ter regions of the chromosome, preventing FtsZ polymerization at these regions. In Yersinia pseudotuberculosis serotype I (strain IP32953), this protein is Nucleoid occlusion factor SlmA.